The chain runs to 3011 residues: Chromodomain-helicase-DNA-binding protein 7 (3011 aa).

Disordered regions lie at residues 90-146 (ISNA…SMWG), 159-189 (PYQQQQQQPQPTQPPQAPSGPPGQGHPQHMQ), 202-422 (MQQH…GSAG), 502-806 (QQLP…VEKI), and 941-960 (PEMERVERPPADDWKKSESS). Low complexity predominate over residues 159 to 168 (PYQQQQQQPQ). The span at 169-179 (PTQPPQAPSGP) shows a compositional bias: pro residues. Residues 203-215 (QQHGQPQQQRMNQ) are compositionally biased toward low complexity. 4 stretches are compositionally biased toward polar residues: residues 216–227 (FSQGQEGLNQGN), 241–258 (VPQQNPSMAPSLRHSVQQ), 291–347 (QTLN…NQSV), and 374–393 (GSLNQMNTQTMHPSQPQGTY). The span at 502–516 (QQLPSQQQSFQQQMP) shows a compositional bias: low complexity. Polar residues-rich tracts occupy residues 576–586 (TQVSGPNTQLV) and 630–641 (DSQNLSRNSVDC). 2 stretches are compositionally biased toward basic and acidic residues: residues 655 to 684 (KKEPKDPKEPKEKKEPKTPKVPKTPKEPKE) and 718 to 730 (KGKEGSENSDLDK). A compositionally biased stretch (basic residues) spans 747 to 759 (QKRRSSRQVKRKR). The span at 760 to 770 (YTEDLEFKISD) shows a compositional bias: basic and acidic residues. Residues 783 to 795 (SPSNTSQSEQQES) show a composition bias toward polar residues. Chromo domains lie at 801 to 868 (PVVE…GQNK) and 883 to 948 (VEID…RVER). The Helicase ATP-binding domain maps to 981 to 1155 (LFNWYNTRNC…FSLLHFLEPG (175 aa)). 994-1001 (DEMGLGKT) contributes to the ATP binding site. The DEAH box signature appears at 1106–1109 (DEAH). Residues 1295-1465 (LIDKLLPKLK…LSKKEIEDLL (171 aa)) form the Helicase C-terminal domain. Disordered stretches follow at residues 1577-1602 (FSDLESDSEEKPSTKPRRPQDKSQGY), 1836-1869 (GTDMLADGGDGGEFDREDEDPEYKPTRTPFKDEI), and 2136-2291 (GTGN…GFYM). Residues 1585–1597 (EEKPSTKPRRPQD) are compositionally biased toward basic and acidic residues. Residues 1845-1856 (DGGEFDREDEDP) are compositionally biased toward acidic residues. The span at 1857-1867 (EYKPTRTPFKD) shows a compositional bias: basic and acidic residues. The segment covering 2136 to 2145 (GTGNANTVSS) has biased composition (polar residues). Basic and acidic residues-rich tracts occupy residues 2166–2207 (QEEK…KQDC) and 2218–2238 (CELKDIEMSTDVDPKSISEKG). Residues 2239-2253 (SEEDEEEKLDDDDKS) are compositionally biased toward acidic residues. Positions 2403–2433 (RRRRRKIEIEAERAAKRRNLMEMVAQLRESQ) form a coiled coil. Residue serine 2561 is modified to Phosphoserine. 2 disordered regions span residues 2825 to 2900 (TTGN…LPTN) and 2946 to 3011 (GSNE…ENDE). Over residues 2841 to 2851 (GASKAEEKKNE) the composition is skewed to basic and acidic residues. Polar residues predominate over residues 2864-2877 (DTVSATDSANGSVS). Low complexity predominate over residues 2878-2893 (AATAATTATATTTTTT). Basic and acidic residues predominate over residues 2948 to 2964 (NEEKATDKTEGTAFKDE). Acidic residues-rich tracts occupy residues 2965–2974 (ENLEGSDAEE) and 2984–3011 (ILEDEIAQGEELDSLDGGEEIENNENDE).

The protein belongs to the SNF2/RAD54 helicase family. Expressed in the neural epithelium, otic placodes, optic placodes, branchial arches, and the olfactory placodes,.

The protein resides in the nucleus. It catalyses the reaction ATP + H2O = ADP + phosphate + H(+). Functionally, ATP-dependent chromatin-remodeling factor, slides nucleosomes along DNA; nucleosome sliding requires ATP.Probable transcription regulator. Maybe involved in the in 45S precursor rRNA production. This chain is Chromodomain-helicase-DNA-binding protein 7 (CHD7), found in Gallus gallus (Chicken).